The sequence spans 350 residues: D-alanine--D-alanine ligase (350 aa).

An ATP-grasp domain is found at 133–334 (NDIFELNKIP…VSEVFDNLIG (202 aa)). 161 to 216 (FEKTSKAVYVKPCNAGSSVGVMRAETEEELEKAIQNAFQYDRRILVEEEIIGPELQ) is an ATP binding site. The Mg(2+) site is built by Asp288, Glu300, and Asn302.

Belongs to the D-alanine--D-alanine ligase family. The cofactor is Mg(2+). Requires Mn(2+) as cofactor.

The protein localises to the cytoplasm. The enzyme catalyses 2 D-alanine + ATP = D-alanyl-D-alanine + ADP + phosphate + H(+). It functions in the pathway cell wall biogenesis; peptidoglycan biosynthesis. In terms of biological role, cell wall formation. In Finegoldia magna (strain ATCC 29328 / DSM 20472 / WAL 2508) (Peptostreptococcus magnus), this protein is D-alanine--D-alanine ligase.